The primary structure comprises 329 residues: Glutamine synthetase (329 aa).

Residues 4–86 (YKLEYIWLDA…VMCEVMMPDA (83 aa)) form the GS beta-grasp domain. The 241-residue stretch at 89 to 329 (PHASNTRATV…GDPYQMLLSS (241 aa)) folds into the GS catalytic domain. Mg(2+) contacts are provided by Glu-109 and Glu-111. Glu-167 serves as a coordination point for ATP. Mg(2+) is bound by residues Glu-172 and Glu-179. An L-glutamate-binding site is contributed by Glu-278.

This sequence belongs to the glutamine synthetase family. Homooctamer and homotetramer. The cofactor is Mg(2+).

It is found in the cytoplasm. The catalysed reaction is L-glutamate + NH4(+) + ATP = L-glutamine + ADP + phosphate + H(+). Functionally, catalyzes the ATP-dependent biosynthesis of glutamine from glutamate and ammonia. This Rhizobium meliloti (Ensifer meliloti) protein is Glutamine synthetase.